Reading from the N-terminus, the 163-residue chain is Nucleotide-binding protein Pnap_1080 (163 aa).

Belongs to the YajQ family.

Nucleotide-binding protein. The chain is Nucleotide-binding protein Pnap_1080 from Polaromonas naphthalenivorans (strain CJ2).